Consider the following 158-residue polypeptide: NAD(P)H-quinone oxidoreductase subunit J, chloroplastic (158 aa).

Belongs to the complex I 30 kDa subunit family. In terms of assembly, NDH is composed of at least 16 different subunits, 5 of which are encoded in the nucleus.

It is found in the plastid. The protein localises to the chloroplast thylakoid membrane. The catalysed reaction is a plastoquinone + NADH + (n+1) H(+)(in) = a plastoquinol + NAD(+) + n H(+)(out). It catalyses the reaction a plastoquinone + NADPH + (n+1) H(+)(in) = a plastoquinol + NADP(+) + n H(+)(out). In terms of biological role, NDH shuttles electrons from NAD(P)H:plastoquinone, via FMN and iron-sulfur (Fe-S) centers, to quinones in the photosynthetic chain and possibly in a chloroplast respiratory chain. The immediate electron acceptor for the enzyme in this species is believed to be plastoquinone. Couples the redox reaction to proton translocation, and thus conserves the redox energy in a proton gradient. In Nicotiana tabacum (Common tobacco), this protein is NAD(P)H-quinone oxidoreductase subunit J, chloroplastic.